A 420-amino-acid polypeptide reads, in one-letter code: RING finger protein 39 (420 aa).

The RING-type zinc-finger motif lies at 88-135; that stretch reads CPLCGGSFEDPVLLACEHSFCRACLARRWGTPPATGTEASPTACPCCG. A B30.2/SPRY domain is found at 210 to 420; the sequence is DDLPEDYPVV…APLRIVPAES (211 aa).

Expressed in testis.

The protein resides in the cytoplasm. The catalysed reaction is S-ubiquitinyl-[E2 ubiquitin-conjugating enzyme]-L-cysteine + [acceptor protein]-L-lysine = [E2 ubiquitin-conjugating enzyme]-L-cysteine + N(6)-ubiquitinyl-[acceptor protein]-L-lysine.. The protein operates within protein modification; protein ubiquitination. Functionally, plays an inhibitory role in anti-RNA viral innate immunity by targeting the adapter DDX3X and promoting its 'Lys-48'-linked polyubiquitination. Alternatively, enhances the cGAS-STING pathway activation by promoting 'Lys-63'-linked ubiquitination of STING1, facilitating the STING1-TBK1 complex formation and STING1 activation. In terms of biological role, (Microbial infection) Plays a positive role in human immunodeficiency virus (HIV-1) replication. This is RING finger protein 39 (RNF39) from Homo sapiens (Human).